Consider the following 201-residue polypeptide: Recombination protein RecR (201 aa).

The C4-type zinc-finger motif lies at 57–72 (CQQCRNFTEEALCEIC). In terms of domain architecture, Toprim spans 81–176 (TTLCIVETPG…NISRIAHGVP (96 aa)).

The protein belongs to the RecR family.

In terms of biological role, may play a role in DNA repair. It seems to be involved in an RecBC-independent recombinational process of DNA repair. It may act with RecF and RecO. This is Recombination protein RecR from Colwellia psychrerythraea (strain 34H / ATCC BAA-681) (Vibrio psychroerythus).